The chain runs to 201 residues: Prostamide/prostaglandin F synthase (201 aa).

It belongs to the peroxiredoxin-like PRXL2 family. Prostamide/prostaglandin F synthase subfamily.

It localises to the cytoplasm. The protein resides in the cytosol. The catalysed reaction is prostaglandin H2 + [thioredoxin]-dithiol = prostaglandin F2alpha + [thioredoxin]-disulfide. It catalyses the reaction prostamide F2alpha + [thioredoxin]-disulfide = prostamide H2 + [thioredoxin]-dithiol. In terms of biological role, catalyzes the reduction of prostaglandin-ethanolamide H(2) (prostamide H(2)) to prostamide F(2alpha) with NADPH as proton donor. Also able to reduce prostaglandin H(2) to prostaglandin F(2alpha). The sequence is that of Prostamide/prostaglandin F synthase (prxl2b) from Danio rerio (Zebrafish).